Here is a 214-residue protein sequence, read N- to C-terminus: Pyridoxine/pyridoxamine 5'-phosphate oxidase (214 aa).

Substrate-binding positions include 9–12 and lysine 67; that span reads RKSY. Residues 62–67, 77–78, arginine 83, lysine 84, and glutamine 106 each bind FMN; these read RIVLLK and YT. Residues tyrosine 124, arginine 128, and serine 132 each coordinate substrate. FMN contacts are provided by residues 141 to 142 and tryptophan 186; that span reads QS. Residue 192–194 participates in substrate binding; sequence RLH. Arginine 196 contributes to the FMN binding site.

Belongs to the pyridoxamine 5'-phosphate oxidase family. In terms of assembly, homodimer. FMN serves as cofactor.

It carries out the reaction pyridoxamine 5'-phosphate + O2 + H2O = pyridoxal 5'-phosphate + H2O2 + NH4(+). It catalyses the reaction pyridoxine 5'-phosphate + O2 = pyridoxal 5'-phosphate + H2O2. The protein operates within cofactor metabolism; pyridoxal 5'-phosphate salvage; pyridoxal 5'-phosphate from pyridoxamine 5'-phosphate: step 1/1. Its pathway is cofactor metabolism; pyridoxal 5'-phosphate salvage; pyridoxal 5'-phosphate from pyridoxine 5'-phosphate: step 1/1. Its function is as follows. Catalyzes the oxidation of either pyridoxine 5'-phosphate (PNP) or pyridoxamine 5'-phosphate (PMP) into pyridoxal 5'-phosphate (PLP). The sequence is that of Pyridoxine/pyridoxamine 5'-phosphate oxidase from Leptospira interrogans serogroup Icterohaemorrhagiae serovar copenhageni (strain Fiocruz L1-130).